A 148-amino-acid polypeptide reads, in one-letter code: Endoribonuclease YbeY (148 aa).

H113, H117, and H123 together coordinate Zn(2+).

The protein belongs to the endoribonuclease YbeY family. It depends on Zn(2+) as a cofactor.

The protein resides in the cytoplasm. Single strand-specific metallo-endoribonuclease involved in late-stage 70S ribosome quality control and in maturation of the 3' terminus of the 16S rRNA. This is Endoribonuclease YbeY from Borrelia duttonii (strain Ly).